The chain runs to 279 residues: Phosphatidylglycerol--prolipoprotein diacylglyceryl transferase (279 aa).

7 consecutive transmembrane segments (helical) span residues 14-34 (IAFS…ACAI), 62-82 (YFLW…ILIY), 106-126 (FVGI…IASY), 136-156 (LLIY…FGRI), 190-210 (PSQL…VMWA), 218-238 (GLLI…AEFY), and 252-272 (LSMG…ILLY). R155 is a binding site for a 1,2-diacyl-sn-glycero-3-phospho-(1'-sn-glycerol).

This sequence belongs to the Lgt family.

It localises to the cell inner membrane. It catalyses the reaction L-cysteinyl-[prolipoprotein] + a 1,2-diacyl-sn-glycero-3-phospho-(1'-sn-glycerol) = an S-1,2-diacyl-sn-glyceryl-L-cysteinyl-[prolipoprotein] + sn-glycerol 1-phosphate + H(+). It participates in protein modification; lipoprotein biosynthesis (diacylglyceryl transfer). Catalyzes the transfer of the diacylglyceryl group from phosphatidylglycerol to the sulfhydryl group of the N-terminal cysteine of a prolipoprotein, the first step in the formation of mature lipoproteins. This chain is Phosphatidylglycerol--prolipoprotein diacylglyceryl transferase, found in Helicobacter pylori (strain HPAG1).